The chain runs to 343 residues: Ferrochelatase (343 aa).

2 residues coordinate Fe cation: histidine 211 and glutamate 292.

Belongs to the ferrochelatase family.

It localises to the cytoplasm. The catalysed reaction is heme b + 2 H(+) = protoporphyrin IX + Fe(2+). The protein operates within porphyrin-containing compound metabolism; protoheme biosynthesis; protoheme from protoporphyrin-IX: step 1/1. Functionally, catalyzes the ferrous insertion into protoporphyrin IX. In Gluconobacter oxydans (strain 621H) (Gluconobacter suboxydans), this protein is Ferrochelatase.